We begin with the raw amino-acid sequence, 272 residues long: Formamidopyrimidine-DNA glycosylase (272 aa).

Proline 2 serves as the catalytic Schiff-base intermediate with DNA. The active-site Proton donor is the glutamate 3. The active-site Proton donor; for beta-elimination activity is lysine 56. DNA contacts are provided by histidine 89, arginine 108, and lysine 149. The FPG-type zinc finger occupies 234–268 (LAYGRAGEMCVNCETPLENLKLGQRASVFCPQCQP). Catalysis depends on arginine 258, which acts as the Proton donor; for delta-elimination activity.

This sequence belongs to the FPG family. Monomer. Zn(2+) is required as a cofactor.

The catalysed reaction is Hydrolysis of DNA containing ring-opened 7-methylguanine residues, releasing 2,6-diamino-4-hydroxy-5-(N-methyl)formamidopyrimidine.. The enzyme catalyses 2'-deoxyribonucleotide-(2'-deoxyribose 5'-phosphate)-2'-deoxyribonucleotide-DNA = a 3'-end 2'-deoxyribonucleotide-(2,3-dehydro-2,3-deoxyribose 5'-phosphate)-DNA + a 5'-end 5'-phospho-2'-deoxyribonucleoside-DNA + H(+). Involved in base excision repair of DNA damaged by oxidation or by mutagenic agents. Acts as a DNA glycosylase that recognizes and removes damaged bases. Has a preference for oxidized purines, such as 7,8-dihydro-8-oxoguanine (8-oxoG). Has AP (apurinic/apyrimidinic) lyase activity and introduces nicks in the DNA strand. Cleaves the DNA backbone by beta-delta elimination to generate a single-strand break at the site of the removed base with both 3'- and 5'-phosphates. This is Formamidopyrimidine-DNA glycosylase from Acinetobacter baylyi (strain ATCC 33305 / BD413 / ADP1).